Reading from the N-terminus, the 226-residue chain is Lipoprotein-releasing system ATP-binding protein LolD (226 aa).

One can recognise an ABC transporter domain in the interval 5-226 (LRCEKISKFY…MADGVLREAS (222 aa)). ATP is bound at residue 41-48 (GSSGSGKS).

This sequence belongs to the ABC transporter superfamily. Lipoprotein translocase (TC 3.A.1.125) family. The complex is composed of two ATP-binding proteins (LolD) and two transmembrane proteins (LolC and LolE).

Its subcellular location is the cell inner membrane. Its function is as follows. Part of the ABC transporter complex LolCDE involved in the translocation of mature outer membrane-directed lipoproteins, from the inner membrane to the periplasmic chaperone, LolA. Responsible for the formation of the LolA-lipoprotein complex in an ATP-dependent manner. This chain is Lipoprotein-releasing system ATP-binding protein LolD, found in Haemophilus ducreyi (strain 35000HP / ATCC 700724).